The chain runs to 417 residues: 4-hydroxy-3-methylbut-2-en-1-yl diphosphate synthase (flavodoxin) (417 aa).

The [4Fe-4S] cluster site is built by Cys-303, Cys-306, Cys-349, and Glu-356.

It belongs to the IspG family. [4Fe-4S] cluster is required as a cofactor.

It carries out the reaction (2E)-4-hydroxy-3-methylbut-2-enyl diphosphate + oxidized [flavodoxin] + H2O + 2 H(+) = 2-C-methyl-D-erythritol 2,4-cyclic diphosphate + reduced [flavodoxin]. Its pathway is isoprenoid biosynthesis; isopentenyl diphosphate biosynthesis via DXP pathway; isopentenyl diphosphate from 1-deoxy-D-xylulose 5-phosphate: step 5/6. Converts 2C-methyl-D-erythritol 2,4-cyclodiphosphate (ME-2,4cPP) into 1-hydroxy-2-methyl-2-(E)-butenyl 4-diphosphate. The sequence is that of 4-hydroxy-3-methylbut-2-en-1-yl diphosphate synthase (flavodoxin) from Mesorhizobium japonicum (strain LMG 29417 / CECT 9101 / MAFF 303099) (Mesorhizobium loti (strain MAFF 303099)).